A 315-amino-acid chain; its full sequence is Protoheme IX farnesyltransferase (315 aa).

Helical transmembrane passes span 34–54, 55–75, 105–125, 127–147, 155–175, 177–197, 226–246, 251–271, and 294–314; these read VISL…GPIN, PLIA…AGAI, ALGF…LAAN, LAAF…TMWL, IVIG…ATTG, LGVL…PHFW, WQIL…SFLH, LYTG…VGVL, and YSLA…FLIM.

This sequence belongs to the UbiA prenyltransferase family. Protoheme IX farnesyltransferase subfamily.

The protein resides in the cell inner membrane. It catalyses the reaction heme b + (2E,6E)-farnesyl diphosphate + H2O = Fe(II)-heme o + diphosphate. It functions in the pathway porphyrin-containing compound metabolism; heme O biosynthesis; heme O from protoheme: step 1/1. Its function is as follows. Converts heme B (protoheme IX) to heme O by substitution of the vinyl group on carbon 2 of heme B porphyrin ring with a hydroxyethyl farnesyl side group. This Gluconacetobacter diazotrophicus (strain ATCC 49037 / DSM 5601 / CCUG 37298 / CIP 103539 / LMG 7603 / PAl5) protein is Protoheme IX farnesyltransferase.